Reading from the N-terminus, the 343-residue chain is uncharacterized protein (343 aa).

The protein belongs to the IIV-6 219L family.

This is an uncharacterized protein from Invertebrate iridescent virus 6 (IIV-6).